The sequence spans 414 residues: MAIVSSTTSIIPMSNQVNNNEKGIEDNDHRGGQESHVQNEDEADDHDHDMVMPGFRFHPTEEELIEFYLRRKVEGKRFNVELITFLDLYRYDPWELPAMAAIGEKEWYFYVPRDRKYRNGDRPNRVTTSGYWKATGADRMIRSETSRPIGLKKTLVFYSGKAPKGTRTSWIMNEYRLPHHETEKYQKAEISLCRVYKRPGVEDHPSVPRSLSTRHHNHNSSTSSRLALRQQQHHSSSSNHSDNNLNNNNNINNLEKLSTEYSGDGSTTTTTTNSNSDVTIALANQNIYRPMPYDTSNNTLIVSTRNHQDDDETAIVDDLQRLVNYQISDGGNINHQYFQIAQQFHHTQQQNANANALQLVAAATTATTLMPQTQAALAMNMIPAGTIPNNALWDMWNPIVPDGNRDHYTNIPFK.

Over residues 1–21 (MAIVSSTTSIIPMSNQVNNNE) the composition is skewed to polar residues. Residues 1–47 (MAIVSSTTSIIPMSNQVNNNEKGIEDNDHRGGQESHVQNEDEADDHD) form a disordered region. The segment covering 22–47 (KGIEDNDHRGGQESHVQNEDEADDHD) has biased composition (basic and acidic residues). One can recognise an NAC domain in the interval 51–198 (VMPGFRFHPT…EISLCRVYKR (148 aa)). Residues 149 to 204 (IGLKKTLVFYSGKAPKGTRTSWIMNEYRLPHHETEKYQKAEISLCRVYKRPGVEDH) mediate DNA binding. The disordered stretch occupies residues 200–251 (GVEDHPSVPRSLSTRHHNHNSSTSSRLALRQQQHHSSSSNHSDNNLNNNNNI). The span at 233 to 251 (HHSSSSNHSDNNLNNNNNI) shows a compositional bias: low complexity.

Expressed in aerial organs in early stages of seedling development.

The protein localises to the nucleus. In terms of biological role, transcription factor that acts as a floral repressor. Controls flowering time by negatively regulating CONSTANS (CO) expression in a GIGANTEA (GI)-independent manner. Regulates the plant cold response by positive regulation of the cold response genes COR15A and KIN1. May coordinate cold response and flowering time. The chain is NAC domain-containing protein 35 from Arabidopsis thaliana (Mouse-ear cress).